A 208-amino-acid polypeptide reads, in one-letter code: 2-phospho-L-lactate guanylyltransferase (208 aa).

The protein belongs to the CofC family. In terms of assembly, homodimer.

It carries out the reaction (2S)-2-phospholactate + GTP + H(+) = (2S)-lactyl-2-diphospho-5'-guanosine + diphosphate. It participates in cofactor biosynthesis; coenzyme F420 biosynthesis. Its function is as follows. Guanylyltransferase that catalyzes the activation of (2S)-2-phospholactate (2-PL) as (2S)-lactyl-2-diphospho-5'-guanosine, via the condensation of 2-PL with GTP. It is involved in the biosynthesis of coenzyme F420, a hydride carrier cofactor. The sequence is that of 2-phospho-L-lactate guanylyltransferase from Methanosarcina mazei (strain ATCC BAA-159 / DSM 3647 / Goe1 / Go1 / JCM 11833 / OCM 88) (Methanosarcina frisia).